A 167-amino-acid chain; its full sequence is NAD(P)H-quinone oxidoreductase subunit I, chloroplastic (167 aa).

2 consecutive 4Fe-4S ferredoxin-type domains span residues 55-84 (GRIH…VDWK) and 95-124 (LNYS…MTEE). [4Fe-4S] cluster is bound by residues Cys64, Cys67, Cys70, Cys74, Cys104, Cys107, Cys110, and Cys114.

This sequence belongs to the complex I 23 kDa subunit family. In terms of assembly, NDH is composed of at least 16 different subunits, 5 of which are encoded in the nucleus. The cofactor is [4Fe-4S] cluster.

The protein resides in the plastid. It is found in the chloroplast thylakoid membrane. It carries out the reaction a plastoquinone + NADH + (n+1) H(+)(in) = a plastoquinol + NAD(+) + n H(+)(out). The catalysed reaction is a plastoquinone + NADPH + (n+1) H(+)(in) = a plastoquinol + NADP(+) + n H(+)(out). Functionally, NDH shuttles electrons from NAD(P)H:plastoquinone, via FMN and iron-sulfur (Fe-S) centers, to quinones in the photosynthetic chain and possibly in a chloroplast respiratory chain. The immediate electron acceptor for the enzyme in this species is believed to be plastoquinone. Couples the redox reaction to proton translocation, and thus conserves the redox energy in a proton gradient. In Atropa belladonna (Belladonna), this protein is NAD(P)H-quinone oxidoreductase subunit I, chloroplastic.